Reading from the N-terminus, the 210-residue chain is Adenylate kinase (210 aa).

ATP is bound at residue 10–15; sequence GSGKGT. The tract at residues 28–57 is NMP; that stretch reads SVGKVLRTVMESNTAEADVVKKFIKSGKLV. AMP-binding positions include R34, 55–57, 83–86, and Q90; these read KLV and GYPR. The LID stretch occupies residues 120–158; the sequence is GRISCTDCGTIYNKLYCMPKINGVCDICNSSSFQNRVDD. R121 contacts ATP. Zn(2+) is bound by residues C124 and C127. 130–131 contributes to the ATP binding site; that stretch reads IY. The Zn(2+) site is built by C144 and C147. AMP is bound by residues R155 and R166. Q194 contributes to the ATP binding site.

This sequence belongs to the adenylate kinase family. In terms of assembly, monomer.

The protein localises to the cytoplasm. The enzyme catalyses AMP + ATP = 2 ADP. The protein operates within purine metabolism; AMP biosynthesis via salvage pathway; AMP from ADP: step 1/1. Functionally, catalyzes the reversible transfer of the terminal phosphate group between ATP and AMP. Plays an important role in cellular energy homeostasis and in adenine nucleotide metabolism. This Orientia tsutsugamushi (strain Boryong) (Rickettsia tsutsugamushi) protein is Adenylate kinase.